The chain runs to 266 residues: Putative carbamate hydrolase RutD (266 aa).

It belongs to the AB hydrolase superfamily. Hydrolase RutD family.

It catalyses the reaction carbamate + 2 H(+) = NH4(+) + CO2. Its function is as follows. Involved in pyrimidine catabolism. May facilitate the hydrolysis of carbamate, a reaction that can also occur spontaneously. The sequence is that of Putative carbamate hydrolase RutD from Escherichia coli (strain B / BL21-DE3).